Consider the following 155-residue polypeptide: Low molecular weight phosphotyrosine protein phosphatase 1 (155 aa).

Residue Cys-9 is the Nucleophile of the active site. The active site involves Arg-15. The active-site Proton donor is the Asp-124.

It belongs to the low molecular weight phosphotyrosine protein phosphatase family. Cone cells and primary pigment cells in developing pupal retina.

Its subcellular location is the cytoplasm. It carries out the reaction O-phospho-L-tyrosyl-[protein] + H2O = L-tyrosyl-[protein] + phosphate. The catalysed reaction is a phosphate monoester + H2O = an alcohol + phosphate. Acts on tyrosine phosphorylated proteins, low-MW aryl phosphates and natural and synthetic acyl phosphates. The polypeptide is Low molecular weight phosphotyrosine protein phosphatase 1 (primo-1) (Drosophila melanogaster (Fruit fly)).